A 114-amino-acid polypeptide reads, in one-letter code: NADH-ubiquinone oxidoreductase chain 3 (114 aa).

Transmembrane regions (helical) follow at residues 3 to 23, 54 to 74, and 85 to 105; these read ATILMIAMTLSTILAILSFWL, FFLIAILFLLFDLEIALLLPF, and IVILWAALILTLLTLGLIYEW.

It belongs to the complex I subunit 3 family.

It localises to the mitochondrion membrane. The enzyme catalyses a ubiquinone + NADH + 5 H(+)(in) = a ubiquinol + NAD(+) + 4 H(+)(out). Core subunit of the mitochondrial membrane respiratory chain NADH dehydrogenase (Complex I) that is believed to belong to the minimal assembly required for catalysis. Complex I functions in the transfer of electrons from NADH to the respiratory chain. The immediate electron acceptor for the enzyme is believed to be ubiquinone. The polypeptide is NADH-ubiquinone oxidoreductase chain 3 (mt-nd3) (Xenopus laevis (African clawed frog)).